A 597-amino-acid chain; its full sequence is MSAILSADDLNDFISPGVACIKPVETLPAKDPSKTDNPYEVTTEDKVQPENLPPAQISLTDCLACSGCVTSAEAVLISLQSHAEVLNTLDAHPELPLNREDGTITQELGTASDEGRVFVASVSPQVRASLAATYGITEKEATYMIHQFLSGPHGLRAGGKNGSGFTWVADTNVLREAVLVLTADEVGETLTTSPDSPSTNGATNTLPKRPILSSACPGWICYAEKTHPFVLPHLSRLKSPQALAGTFFKTVLSKSLGIPASRIWHLAVMPCFDKKLEASREELTDASWLSAKDEDHTAVRDVDCVITTREMLSLASSRGISLPNLPLKSLPQSYIPPFPDMTLNDFLFSKSSPGQSAAAGTSGGYLHHVLQTFQARNPGSEIVTQRGRNADVVEYTLMSSEHTPILKAARYYGFRNIQNLVRKLKPARASRLPGGNRRLPVGRGAASGSSGTDYAYVEVMACPGGCTNGGGQIRIEDAREASSSVQSSTSAEVPDSSSKPTPHEQRAWLARVDEAYYSAESDTESEAGSQSQPLSILDKEDKIHNAMRYWSDSMGIPLSKLAYTTYREVESDVGKSQPAATDTTRVAELAGKIGGGW.

[4Fe-4S] cluster-binding residues include Cys20, Cys62, Cys65, Cys68, Cys216, and Cys271. The disordered stretch occupies residues 428 to 449; it reads RASRLPGGNRRLPVGRGAASGS. [4Fe-4S] cluster contacts are provided by Cys462 and Cys466. The segment at 479–505 is disordered; sequence REASSSVQSSTSAEVPDSSSKPTPHEQ.

This sequence belongs to the NARF family.

Component of the cytosolic Fe/S protein assembly machinery. Required for maturation of extramitochondrial Fe/S proteins. May play a role in the transfer of pre-assembled Fe/S clusters to target apoproteins. The sequence is that of Cytosolic Fe-S cluster assembly factor nar1 (nar1) from Aspergillus niger (strain ATCC MYA-4892 / CBS 513.88 / FGSC A1513).